The following is a 519-amino-acid chain: Cytosol aminopeptidase (519 aa).

Phosphoserine is present on serine 42. Position 45 is an N6-succinyllysine (lysine 45). Residue serine 54 is modified to Phosphoserine. Lysine 61 and lysine 103 each carry N6-succinyllysine. Residues serine 180 and serine 194 each carry the phosphoserine modification. Zn(2+) is bound by residues leucine 202, methionine 203, and threonine 205. An N6-acetyllysine; alternate modification is found at lysine 221. N6-succinyllysine; alternate is present on lysine 221. At serine 238 the chain carries Phosphoserine. Residues lysine 282 and aspartate 287 each coordinate Zn(2+). Lysine 282, aspartate 287, serine 292, and lysine 294 together coordinate substrate. A Mg(2+)-binding site is contributed by aspartate 287. Lysine 294 is an active-site residue. Residues arginine 303, aspartate 305, aspartate 364, and glutamate 366 each contribute to the Zn(2+) site. Residues aspartate 305 and aspartate 364 each coordinate substrate. Residues aspartate 364 and glutamate 366 each contribute to the Mg(2+) site. Residue arginine 368 is part of the active site. Lysine 455 is subject to N6-acetyllysine; alternate. Lysine 455 is subject to N6-succinyllysine; alternate. Lysine 476 is modified (N6-succinyllysine). Lysine 489 is modified (N6-acetyllysine; alternate). Lysine 489 is subject to N6-succinyllysine; alternate.

Belongs to the peptidase M17 family. In terms of assembly, homohexamer. Zn(2+) serves as cofactor. Requires Mn(2+) as cofactor.

It localises to the cytoplasm. The enzyme catalyses Release of an N-terminal amino acid, Xaa-|-Yaa-, in which Xaa is preferably Leu, but may be other amino acids including Pro although not Arg or Lys, and Yaa may be Pro. Amino acid amides and methyl esters are also readily hydrolyzed, but rates on arylamides are exceedingly low.. It catalyses the reaction an S-substituted L-cysteinylglycine + H2O = an S-substituted L-cysteine + glycine. It carries out the reaction L-cysteinylglycine + H2O = L-cysteine + glycine. The catalysed reaction is S-benzyl-L-cysteinylglycine + H2O = S-benzyl-L-cysteine + glycine. The enzyme catalyses Release of N-terminal proline from a peptide.. Its function is as follows. Cytosolic metallopeptidase that catalyzes the removal of unsubstituted N-terminal hydrophobic amino acids from various peptides. The presence of Zn(2+) ions is essential for the peptidase activity, and the association with other cofactors can modulate the substrate spectificity of the enzyme. For instance, in the presence of Mn(2+), it displays a specific Cys-Gly hydrolyzing activity of Cys-Gly-S-conjugates. Involved in the metabolism of glutathione and in the degradation of glutathione S-conjugates, which may play a role in the control of the cell redox status. This Homo sapiens (Human) protein is Cytosol aminopeptidase.